The sequence spans 282 residues: Putative 4-diphosphocytidyl-2-C-methyl-D-erythritol kinase (282 aa).

Lys-9 is an active-site residue. 93–103 (PVSAGLAGGST) is a binding site for ATP. Asp-135 is a catalytic residue.

It belongs to the GHMP kinase family. IspE subfamily.

It catalyses the reaction 4-CDP-2-C-methyl-D-erythritol + ATP = 4-CDP-2-C-methyl-D-erythritol 2-phosphate + ADP + H(+). In terms of biological role, catalyzes the phosphorylation of the position 2 hydroxy group of 4-diphosphocytidyl-2C-methyl-D-erythritol. The sequence is that of Putative 4-diphosphocytidyl-2-C-methyl-D-erythritol kinase from Staphylococcus saprophyticus subsp. saprophyticus (strain ATCC 15305 / DSM 20229 / NCIMB 8711 / NCTC 7292 / S-41).